The chain runs to 368 residues: Flagellar P-ring protein (368 aa).

The N-terminal stretch at 1–24 is a signal peptide; sequence MTLTRPLALISALAALILALPADA.

This sequence belongs to the FlgI family. As to quaternary structure, the basal body constitutes a major portion of the flagellar organelle and consists of four rings (L,P,S, and M) mounted on a central rod.

The protein resides in the periplasm. The protein localises to the bacterial flagellum basal body. Its function is as follows. Assembles around the rod to form the L-ring and probably protects the motor/basal body from shearing forces during rotation. The polypeptide is Flagellar P-ring protein (Methylobacillus flagellatus (strain ATCC 51484 / DSM 6875 / VKM B-1610 / KT)).